Consider the following 377-residue polypeptide: MSVLFTILLMAVIGGFIGAMTNYIAIRMLFRPYKAVYLFNKRLPFTPGLIPKRRDELAEHIGKVVVSHLLTEDAIRARLLDENLQREVTETITKMFHEKMKLETTPNELLHHLGYENAEVRSISWLERTLEIEISRFLTTKQSTQMSELIPSMLENELTKKLPHVTERITSKMSVFIASEAGKIQIKQMLQKFFEEHGKMGSMARMFINIDSFSEKIQQEGLKLINQEDTKNIINQLLTTEWHNFEAKELQELIPTEKQAHLAGQLTSEIIQAVPHEKLFNQPIQGILRNYESAITEKMIPFAVERMLDFVATHSAEIVERMDLAKLVETQIATFSLPEIEKLVVEISGRELKMITYLGGILGGFIGIIQGILAMWI.

2 helical membrane passes run 1–21 and 357–377; these read MSVL…GAMT and YLGG…AMWI.

This sequence belongs to the UPF0754 family.

The protein resides in the cell membrane. This is UPF0754 membrane protein lin2327 from Listeria innocua serovar 6a (strain ATCC BAA-680 / CLIP 11262).